Consider the following 251-residue polypeptide: Imidazole glycerol phosphate synthase subunit HisF (251 aa).

Active-site residues include Asp-11 and Asp-130.

Belongs to the HisA/HisF family. Heterodimer of HisH and HisF.

It is found in the cytoplasm. The enzyme catalyses 5-[(5-phospho-1-deoxy-D-ribulos-1-ylimino)methylamino]-1-(5-phospho-beta-D-ribosyl)imidazole-4-carboxamide + L-glutamine = D-erythro-1-(imidazol-4-yl)glycerol 3-phosphate + 5-amino-1-(5-phospho-beta-D-ribosyl)imidazole-4-carboxamide + L-glutamate + H(+). Its pathway is amino-acid biosynthesis; L-histidine biosynthesis; L-histidine from 5-phospho-alpha-D-ribose 1-diphosphate: step 5/9. In terms of biological role, IGPS catalyzes the conversion of PRFAR and glutamine to IGP, AICAR and glutamate. The HisF subunit catalyzes the cyclization activity that produces IGP and AICAR from PRFAR using the ammonia provided by the HisH subunit. This Natranaerobius thermophilus (strain ATCC BAA-1301 / DSM 18059 / JW/NM-WN-LF) protein is Imidazole glycerol phosphate synthase subunit HisF.